A 709-amino-acid polypeptide reads, in one-letter code: Copper amine oxidase vicK1 (709 aa).

The first 20 residues, M1–Q20, serve as a signal peptide directing secretion. D365 functions as the Proton acceptor in the catalytic mechanism. Cysteines 383 and 408 form a disulfide. The Schiff-base intermediate with substrate; via topaquinone role is filled by Y448. Y448 is subject to 2',4',5'-topaquinone. Cu cation contacts are provided by H496 and H498. 8 residues coordinate Ca(2+): D505, L506, D507, E548, F641, E645, D651, and L652. A Cu cation-binding site is contributed by H662.

It belongs to the copper/topaquinone oxidase family. Homodimer; disulfide-linked. The cofactor is Cu cation. Ca(2+) is required as a cofactor. It depends on L-topaquinone as a cofactor. Topaquinone (TPQ) is generated by copper-dependent autoxidation of a specific tyrosyl residue.

The protein operates within mycotoxin biosynthesis. Its function is as follows. Copper amine oxidase, part of the gene cluster that mediates the biosynthesis of the secondary metabolite victorin, the molecular basis for Victoria blight of oats. Within the pathway, vicK1 catalyzes the oxidative deamination of the N-terminal glycyl moiety of the hexapeptides in order to produce the active glyoxylate form victorins. The pathway starts with the processing of the precursor vicA1 by several endopeptidases including kexin proteases as well as the cluster-specific S28 family peptidases vicPa and vicPb to produce 7 identical copies of the hexapeptide Gly-Leu-Lys-Leu-Ala-Phe. After being excised from the precursor peptide, the core peptides are cyclized and modified post-translationally by enzymes encoded within the gene cluster. The ustYa family oxidase vicYb is required for the formation of the macrocycle in victorin and the copper amine oxidases (CAOs) vicK1 and vicK2 are responsible for converting victorin to the active form by oxidizing the N-terminal glycyl residue in the peptides to glyoxylate. Relaxed substrate specificity of enzymes in the victorin biosynthetic pathway results in a metabolic grid that produces a set of analogs including victorinines B, C, E or HV-toxin M. The sequence is that of Copper amine oxidase vicK1 from Bipolaris victoriae (strain FI3) (Victoria blight of oats agent).